Here is a 347-residue protein sequence, read N- to C-terminus: MRASMLRLIRSRSSSAAPRPHLLRRAYGSESVPERKVAVLGAAGGIGQPLALLMKLNPLVSQLALYDIAGTPGVAADVGHINTRSEVAGYVGEEQLGQALEGSDVVIIPAGVPRKPGMTRDDLFNINAGIVKSLCTAIAKYCPNAVVNMISNPVNSTVPIAAEIFKKAGTYNEKKLLGVTTLDVVRAKTFYAGKAKVPVEEVNVPVVGGHAGITILPLFSQAVPKANLADEDIKALTKRTQDGGTEVVEAKAGKGSATLSMAYAGALFADACLKGLNGVPDVVECSFVQSSIITELPFFASKVKLGKNGVEEVLELGPMSDYEKQGLEILIPELKASIEKGIKFANQ.

A mitochondrion-targeting transit peptide spans 1–27; it reads MRASMLRLIRSRSSSAAPRPHLLRRAY. NAD(+)-binding positions include 41–47 and Asp67; that span reads GAAGGIG. Substrate is bound by residues Arg114 and Arg120. NAD(+) is bound by residues Asn127 and 150–152; that span reads ISN. Asn152 and Arg186 together coordinate substrate. The active-site Proton acceptor is His210. Residue Met261 coordinates NAD(+).

The protein belongs to the LDH/MDH superfamily. MDH type 1 family. As to quaternary structure, homodimer.

The protein localises to the mitochondrion matrix. It carries out the reaction (S)-malate + NAD(+) = oxaloacetate + NADH + H(+). The protein is Malate dehydrogenase, mitochondrial (MDH) of Eucalyptus gunnii (Cider gum).